A 396-amino-acid polypeptide reads, in one-letter code: Diels-Alderase mpsD (396 aa).

Belongs to the Diels-Alderase family.

Its pathway is secondary metabolite biosynthesis. Its function is as follows. Diels-Alderase; part of the gene cluster that mediates the biosynthesis of macrophasetins, 3-decalinoyltetramic acids (DTAs) which feature a tetramate (pyrrolidine-2,4-dione) unit connected to a decalin fragment and that have potent bioactivities. The PKS-NRPS mpsA together with its associated enoylreductase partner mpsG incorporate one unit of acetyl-CoA, seven units of malonyl-CoA, and one unit of L-alanine to assemble the linear tetramic acid intermediate corresponding to the backbone of macrophasetins. Without the Diels-Alderase mpsD, the mpsA/G product can undergo the non-enzymatic intramolecular Diels-Alder (IMDA) reaction to generate both macrophasetin A and macrophasetin B. Catalyzed by mpsD, the linear tetramic acid intermediate is thoroughly converted to macrophasetin A via the endo-IMDA reaction in a regioselective and stereoselective manner. Finally, the cytochrome P450 monooxygenase mpsF catalyzes the hydroxylation at C20 to yield the end product macrophasetin C. The chain is Diels-Alderase mpsD from Macrophomina phaseolina (strain MS6) (Charcoal rot fungus).